Here is a 614-residue protein sequence, read N- to C-terminus: 1-deoxy-D-xylulose-5-phosphate synthase (614 aa).

Thiamine diphosphate contacts are provided by residues histidine 74 and 115-117 (AHS). Aspartate 146 is a Mg(2+) binding site. Residues 147 to 148 (GA), asparagine 175, tyrosine 282, and glutamate 363 each bind thiamine diphosphate. A Mg(2+)-binding site is contributed by asparagine 175.

It belongs to the transketolase family. DXPS subfamily. In terms of assembly, homodimer. It depends on Mg(2+) as a cofactor. Requires thiamine diphosphate as cofactor.

It carries out the reaction D-glyceraldehyde 3-phosphate + pyruvate + H(+) = 1-deoxy-D-xylulose 5-phosphate + CO2. It participates in metabolic intermediate biosynthesis; 1-deoxy-D-xylulose 5-phosphate biosynthesis; 1-deoxy-D-xylulose 5-phosphate from D-glyceraldehyde 3-phosphate and pyruvate: step 1/1. In terms of biological role, catalyzes the acyloin condensation reaction between C atoms 2 and 3 of pyruvate and glyceraldehyde 3-phosphate to yield 1-deoxy-D-xylulose-5-phosphate (DXP). The sequence is that of 1-deoxy-D-xylulose-5-phosphate synthase from Nitrosospira multiformis (strain ATCC 25196 / NCIMB 11849 / C 71).